Reading from the N-terminus, the 103-residue chain is ATP synthase F(0) complex subunit g, mitochondrial (103 aa).

The residue at position 2 (Ala2) is an N-acetylalanine. An N6-acetyllysine mark is found at Lys11, Lys24, Lys35, and Lys54.

Belongs to the ATPase g subunit family. Component of the ATP synthase complex composed at least of ATP5F1A/subunit alpha, ATP5F1B/subunit beta, ATP5MC1/subunit c (homooctomer), MT-ATP6/subunit a, MT-ATP8/subunit 8, ATP5ME/subunit e, ATP5MF/subunit f, ATP5MG/subunit g, ATP5MK/subunit k, ATP5MJ/subunit j, ATP5F1C/subunit gamma, ATP5F1D/subunit delta, ATP5F1E/subunit epsilon, ATP5PF/subunit F6, ATP5PB/subunit b, ATP5PD/subunit d, ATP5PO/subunit OSCP. ATP synthase complex consists of a soluble F(1) head domain (subunits alpha(3) and beta(3)) - the catalytic core - and a membrane F(0) domain - the membrane proton channel (subunits c, a, 8, e, f, g, k and j). These two domains are linked by a central stalk (subunits gamma, delta, and epsilon) rotating inside the F1 region and a stationary peripheral stalk (subunits F6, b, d, and OSCP).

It localises to the mitochondrion. Its subcellular location is the mitochondrion inner membrane. Functionally, subunit g, of the mitochondrial membrane ATP synthase complex (F(1)F(0) ATP synthase or Complex V) that produces ATP from ADP in the presence of a proton gradient across the membrane which is generated by electron transport complexes of the respiratory chain. ATP synthase complex consist of a soluble F(1) head domain - the catalytic core - and a membrane F(1) domain - the membrane proton channel. These two domains are linked by a central stalk rotating inside the F(1) region and a stationary peripheral stalk. During catalysis, ATP synthesis in the catalytic domain of F(1) is coupled via a rotary mechanism of the central stalk subunits to proton translocation. In vivo, can only synthesize ATP although its ATP hydrolase activity can be activated artificially in vitro. Part of the complex F(0) domain. The sequence is that of ATP synthase F(0) complex subunit g, mitochondrial from Mus musculus (Mouse).